The chain runs to 263 residues: Endonuclease 8 (263 aa).

P2 serves as the catalytic Schiff-base intermediate with DNA. The Proton donor role is filled by E3. The active-site Proton donor; for beta-elimination activity is K53. Positions 70, 125, and 169 each coordinate DNA. An FPG-type zinc finger spans residues K229–H263. Catalysis depends on R253, which acts as the Proton donor; for delta-elimination activity.

It belongs to the FPG family. Zn(2+) is required as a cofactor.

It carries out the reaction 2'-deoxyribonucleotide-(2'-deoxyribose 5'-phosphate)-2'-deoxyribonucleotide-DNA = a 3'-end 2'-deoxyribonucleotide-(2,3-dehydro-2,3-deoxyribose 5'-phosphate)-DNA + a 5'-end 5'-phospho-2'-deoxyribonucleoside-DNA + H(+). In terms of biological role, involved in base excision repair of DNA damaged by oxidation or by mutagenic agents. Acts as a DNA glycosylase that recognizes and removes damaged bases. Has a preference for oxidized pyrimidines, such as thymine glycol, 5,6-dihydrouracil and 5,6-dihydrothymine. Has AP (apurinic/apyrimidinic) lyase activity and introduces nicks in the DNA strand. Cleaves the DNA backbone by beta-delta elimination to generate a single-strand break at the site of the removed base with both 3'- and 5'-phosphates. The chain is Endonuclease 8 from Escherichia coli O6:K15:H31 (strain 536 / UPEC).